The following is a 280-amino-acid chain: Dermonecrotic toxin LgSicTox-alphaIC1 (280 aa).

Residue His12 is part of the active site. The Mg(2+) site is built by Glu32 and Asp34. The Nucleophile role is filled by His48. 2 disulfide bridges follow: Cys52–Cys58 and Cys54–Cys197. Asp92 contributes to the Mg(2+) binding site.

Belongs to the arthropod phospholipase D family. Class II subfamily. Requires Mg(2+) as cofactor. In terms of tissue distribution, expressed by the venom gland.

It localises to the secreted. The catalysed reaction is an N-(acyl)-sphingosylphosphocholine = an N-(acyl)-sphingosyl-1,3-cyclic phosphate + choline. The enzyme catalyses an N-(acyl)-sphingosylphosphoethanolamine = an N-(acyl)-sphingosyl-1,3-cyclic phosphate + ethanolamine. It catalyses the reaction a 1-acyl-sn-glycero-3-phosphocholine = a 1-acyl-sn-glycero-2,3-cyclic phosphate + choline. It carries out the reaction a 1-acyl-sn-glycero-3-phosphoethanolamine = a 1-acyl-sn-glycero-2,3-cyclic phosphate + ethanolamine. In terms of biological role, dermonecrotic toxins cleave the phosphodiester linkage between the phosphate and headgroup of certain phospholipids (sphingolipid and lysolipid substrates), forming an alcohol (often choline) and a cyclic phosphate. This toxin acts on sphingomyelin (SM) with high activity. It may also act on ceramide phosphoethanolamine (CPE), lysophosphatidylcholine (LPC) and lysophosphatidylethanolamine (LPE), but not on lysophosphatidylserine (LPS), and lysophosphatidylglycerol (LPG). It acts by transphosphatidylation, releasing exclusively cyclic phosphate products as second products. Induces platelet aggregation in platelet rich plasma, but not in washed platelet, indicating that this activity is dependent on plasma components. Also induces hemolysis. In vivo, the recombinant protein evokes an intense inflammatory reaction and dermonecrosis, similar to those induced by L.gaucho total venom. Is a good immunogen, capable of inducing immunoprotection in test animals. Its function is as follows. Anionic antimicrobial peptide that shows antimicrobial activity against Gram-negative bacteria (MIC=1.15-4.6 uM) (tested on E.coli, P.aeruginosa, and E.cloacae), but not on Gram-negative bacteria (M.luteus, S.aureus, and B.subtilis), neither on fungi and yeasts (A.niger, C.albicans and C.krusei). Does not show hemolytic effects against human erythrocytes, and has no cytotoxic effects against human cervical carcinoma cells (HeLa). This is Dermonecrotic toxin LgSicTox-alphaIC1 from Loxosceles gaucho (Spider).